Reading from the N-terminus, the 155-residue chain is Ribosome maturation factor RimP (155 aa).

Belongs to the RimP family.

The protein resides in the cytoplasm. Functionally, required for maturation of 30S ribosomal subunits. In Maridesulfovibrio salexigens (strain ATCC 14822 / DSM 2638 / NCIMB 8403 / VKM B-1763) (Desulfovibrio salexigens), this protein is Ribosome maturation factor RimP.